Here is a 392-residue protein sequence, read N- to C-terminus: Methylthioribose-1-phosphate isomerase (392 aa).

Asp-253 acts as the Proton donor in catalysis.

The protein belongs to the eIF-2B alpha/beta/delta subunits family. MtnA subfamily.

It is found in the cytoplasm. The protein resides in the nucleus. It catalyses the reaction 5-(methylsulfanyl)-alpha-D-ribose 1-phosphate = 5-(methylsulfanyl)-D-ribulose 1-phosphate. Its pathway is amino-acid biosynthesis; L-methionine biosynthesis via salvage pathway; L-methionine from S-methyl-5-thio-alpha-D-ribose 1-phosphate: step 1/6. Catalyzes the interconversion of methylthioribose-1-phosphate (MTR-1-P) into methylthioribulose-1-phosphate (MTRu-1-P). In Pyrenophora tritici-repentis (strain Pt-1C-BFP) (Wheat tan spot fungus), this protein is Methylthioribose-1-phosphate isomerase (mri1).